The chain runs to 70 residues: Myotoxin (70 aa).

Residues 1–22 (MKILYLLFAFLFLAFLSEPGNA) form the signal peptide. Disulfide bonds link cysteine 26-cysteine 58, cysteine 33-cysteine 52, and cysteine 40-cysteine 59.

This sequence belongs to the crotamine-myotoxin family. Monomer. In terms of tissue distribution, expressed by the venom gland.

Its subcellular location is the secreted. Functionally, cationic peptide that possesses multiple functions. It acts as a cell-penetrating peptide (CPP), and as a potent voltage-gated potassium channel (Kv) inhibitor. It exhibits antimicrobial activities, hind limb paralysis, and severe muscle necrosis by a non-enzymatic mechanism. The polypeptide is Myotoxin (Crotalus adamanteus (Eastern diamondback rattlesnake)).